Reading from the N-terminus, the 253-residue chain is MERLKCTVSYDGSDFAGFQVQPDHRTVQGVLEKALYNMHKGKSIRIQASGRTDTGVHAVGQVIHFDSPLEIPERNWKQALNTLLPDDVRIQKVEKKTEEFHARYSVKEKEYHYFVLNEEDPNVFQRGYVYHEPRKLDLERMQEACQYLEGTHDFTSFSSAKSSVKGSKVRTLYHVSCHQTGTNIEFIFRGSGFLYNMVRIMMSVLIDVGKGKRNPEDIIDLLASKNRQQIGKTMAPQGLYLWRVSYEENGNNV.

The Nucleophile role is filled by Asp53. A substrate-binding site is contributed by Tyr111.

This sequence belongs to the tRNA pseudouridine synthase TruA family. Homodimer.

It catalyses the reaction uridine(38/39/40) in tRNA = pseudouridine(38/39/40) in tRNA. Functionally, formation of pseudouridine at positions 38, 39 and 40 in the anticodon stem and loop of transfer RNAs. The chain is tRNA pseudouridine synthase A from Oceanobacillus iheyensis (strain DSM 14371 / CIP 107618 / JCM 11309 / KCTC 3954 / HTE831).